The sequence spans 829 residues: MKMTRRAFVKANAAASAAAVAGVTLPATATNLIASSDQTKITWDKAPCRFCGTGCSVLVGTQNGKVVATQGDPEAPVNKGLNCIKGYFLSKIMYGKDRLEQPLLRMKDGEFHKDGDFAPVSWDKAFDVMAEKWKAALKKNGPTGVGMFGSGQWTVMEGYAAVKLMKAGFRSNNIDPNARHCMASAVGAFMRTFGIDEPMGCYDDFEHADAFVLWGSNMAEMHPVLWTRITDRRLSHPHVKVNVLSTYYHRSFELADTGYIFEPQSDLAIANFIANYIIQNDAVNWEFVNKHTNFKQATTDIGYGLRDNDPLQKAAANPNSGKMTDISFEDYKASVAEYTVEKASEMSGVSQDDLIKLAKQYADPNIKVMSLWTMGMNQHTRGVWMNSLVYNIHLLTGKISTPGNSPFSLTGQPSACGTAREVGTFSHRLPADMVVANPKHRKIAEDIWKLPEGTIPPKPGKHAVAQDRALKDGTINAYWVMCNNNMQAGPNINTERLPGYRNPDNFIVCSDPYPTATAQASDLILPTAMWIEKEGAYGNAERRTQAWYQQVKTVGEAKSDLWQIMEFSKRFTVEEVWGEELLAKAPEYRGKTMYDVLYKNGNVDAFPLSEAQELNDDAQAQGFYVQKGLFEEYAAFGRDHGHDLAPYDTYHKVRGLRWPVVDGKETLWRFKEGSDPYAKKGSGWDFYGKPDGKALIINAPYEAPPEVPSDEYDMWLCTGRVLEHWHTGTMTRRVPELYKAVPDALCYIHPADAKARGLRRGDEVLIENKRGEVRVRVETRGRNRPPQGLVFVPFFDARILINKLILDATDPLSKQTDYKKCPVKITKVS.

Residues 1 to 29 (MKMTRRAFVKANAAASAAAVAGVTLPATA) constitute a signal peptide (tat-type signal). The 4Fe-4S Mo/W bis-MGD-type domain maps to 41-97 (ITWDKAPCRFCGTGCSVLVGTQNGKVVATQGDPEAPVNKGLNCIKGYFLSKIMYGKD). 4 residues coordinate [4Fe-4S] cluster: Cys-48, Cys-51, Cys-55, and Cys-83. Mo-bis(molybdopterin guanine dinucleotide)-binding positions include Lys-85, Gln-152, Asn-177, Cys-181, 214–221 (WGSNMAEM), 245–249 (STYYH), 264–266 (QSD), Met-374, Gln-378, Asn-484, 510–511 (SD), Lys-533, Asp-560, and 718–727 (TGRVLEHWHT). Phe-794 contributes to the substrate binding site. Residues Asn-802 and Lys-819 each coordinate Mo-bis(molybdopterin guanine dinucleotide).

It belongs to the prokaryotic molybdopterin-containing oxidoreductase family. NasA/NapA/NarB subfamily. Component of the periplasmic nitrate reductase NapAB complex composed of NapA and NapB. It depends on [4Fe-4S] cluster as a cofactor. Requires Mo-bis(molybdopterin guanine dinucleotide) as cofactor. In terms of processing, predicted to be exported by the Tat system. The position of the signal peptide cleavage has not been experimentally proven.

The protein localises to the periplasm. The enzyme catalyses 2 Fe(II)-[cytochrome] + nitrate + 2 H(+) = 2 Fe(III)-[cytochrome] + nitrite + H2O. In terms of biological role, catalytic subunit of the periplasmic nitrate reductase complex NapAB. Receives electrons from NapB and catalyzes the reduction of nitrate to nitrite. The sequence is that of Periplasmic nitrate reductase from Vibrio atlanticus (strain LGP32) (Vibrio splendidus (strain Mel32)).